Reading from the N-terminus, the 485-residue chain is E3 ubiquitin-protein ligase TRIM68 (485 aa).

An RING-type zinc finger spans residues 16-61; it reads CPICMTFLREPMSIDCGHSFCHSCLSGLWEIPGESQNWGYTCPLCR. A B box-type zinc finger spans residues 93–134; it reads LKGDLCERHGEKLKMFCKEDVLIMCEACSQSPEHEAHSVVPM. 4 residues coordinate Zn(2+): Cys-98, His-101, Cys-120, and His-126. Residues 207–239 adopt a coiled-coil conformation; that stretch reads AEVAAALASLQREAAETMQKLELNHSELIQQSQ. A B30.2/SPRY domain is found at 285–481; that stretch reads LKTDCRVLGL…NTAPLAICSL (197 aa).

This sequence belongs to the TRIM/RBCC family. Interacts with AR/androgen receptor (via ligand-binding domain). Interacts with KAT5/TIP60. Auto-ubiquitinated. As to expression, widely expressed. Expressed at high levels in prostate cancer cell lines. Up-regulation could be restricted to androgen-dependent cells.

It is found in the cytoplasm. The protein resides in the perinuclear region. The protein localises to the nucleus. It carries out the reaction S-ubiquitinyl-[E2 ubiquitin-conjugating enzyme]-L-cysteine + [acceptor protein]-L-lysine = [E2 ubiquitin-conjugating enzyme]-L-cysteine + N(6)-ubiquitinyl-[acceptor protein]-L-lysine.. It functions in the pathway protein modification; protein ubiquitination. Its function is as follows. Functions as a ubiquitin E3 ligase. Acts as a coactivator of androgen receptor (AR) depending on its ubiquitin ligase activity. In Homo sapiens (Human), this protein is E3 ubiquitin-protein ligase TRIM68 (TRIM68).